The sequence spans 685 residues: Iron(3+)-hydroxamate import system permease protein FhuB (685 aa).

The next 18 helical transmembrane spans lie at 35–55 (ALLL…NFSV), 87–107 (LAIS…FQQV), 120–140 (VATG…PGAL), 143–163 (QFAA…VAWG), 172–192 (ILAG…LVIF), 222–242 (QLLG…LMGL), 265–285 (AIVL…IGLF), 302–322 (LMLA…IILW), 328–348 (MEVS…LWLL), 373–393 (LAFA…ALSF), 416–436 (WPRI…GCII), 456–476 (AAFG…GWLL), 479–499 (GSLG…RGGF), 504–524 (MLLA…MLQA), 553–573 (AIVM…LTIL), 592–612 (IALL…IGPL), 632–652 (MPHM…ADWC), and 660–680 (YQIP…IYLL).

This sequence belongs to the binding-protein-dependent transport system permease family. FecCD subfamily. As to quaternary structure, the complex is composed of two ATP-binding proteins (FhuC), a transmembrane protein (FhuB) and a solute-binding protein (FhuD).

The protein resides in the cell inner membrane. In terms of biological role, part of the ABC transporter complex FhuCDB involved in iron(3+)-hydroxamate import. Responsible for the translocation of the substrate across the membrane. Involved in ferrioxamine-mediated iron(III) utilization. The polypeptide is Iron(3+)-hydroxamate import system permease protein FhuB (fhuB) (Salmonella typhimurium (strain LT2 / SGSC1412 / ATCC 700720)).